A 550-amino-acid chain; its full sequence is Rhodopsin kinase grk7-b (550 aa).

Residues 22-45 (SSEGDAKELQKRRKSLSLPPPDVS) form a disordered region. Residue Ser36 is modified to Phosphoserine. The region spanning 57 to 174 (YQSICVEQPI…QNSPFYDRFL (118 aa)) is the RGS domain. The region spanning 189 to 451 (FYEFRILGKG…DDDPRKHAFF (263 aa)) is the Protein kinase domain. ATP-binding positions include 195-203 (LGKGGFGEV) and Lys218. Asp314 functions as the Proton acceptor in the catalytic mechanism. In terms of domain architecture, AGC-kinase C-terminal spans 452–517 (KSINFQRLEA…GAVPISWQKE (66 aa)). Ser487 carries the post-translational modification Phosphoserine. Residues 531–550 (SREVTGGGNSGEKSGVCSIL) form a disordered region. The residue at position 547 (Cys547) is a Cysteine methyl ester. The S-geranylgeranyl cysteine moiety is linked to residue Cys547. A propeptide spans 548 to 550 (SIL) (removed in mature form).

The protein belongs to the protein kinase superfamily. AGC Ser/Thr protein kinase family. GPRK subfamily. Autophosphorylated in vitro at Ser-487. Phosphorylation at Ser-36 is regulated by light and activated by cAMP. Retina, cones.

The protein resides in the membrane. It catalyses the reaction L-threonyl-[rhodopsin] + ATP = O-phospho-L-threonyl-[rhodopsin] + ADP + H(+). The catalysed reaction is L-seryl-[rhodopsin] + ATP = O-phospho-L-seryl-[rhodopsin] + ADP + H(+). In terms of biological role, retina-specific kinase involved in the shutoff of the photoresponse and adaptation to changing light conditions via cone opsin phosphorylation, including rhodopsin (RHO). This chain is Rhodopsin kinase grk7-b (grk7-b), found in Xenopus laevis (African clawed frog).